The chain runs to 234 residues: ATP synthase subunit a 1 (234 aa).

Transmembrane regions (helical) follow at residues 20–40 (ETVVTTWLIMLVLVVASILLT), 76–96 (LLPLIGTFWIFLPVANLLGVI), 105–125 (DLSVTAALALVVFFAVHAYGV), 162–184 (LFGNIMSLEMAALLILLVAGFLA), and 195–215 (EALVQAYIFGMLALIYVAGAM).

It belongs to the ATPase A chain family. F-type ATPases have 2 components, CF(1) - the catalytic core - and CF(0) - the membrane proton channel. CF(1) has five subunits: alpha(3), beta(3), gamma(1), delta(1), epsilon(1). CF(0) has three main subunits: a(1), b(2) and c(9-12). The alpha and beta chains form an alternating ring which encloses part of the gamma chain. CF(1) is attached to CF(0) by a central stalk formed by the gamma and epsilon chains, while a peripheral stalk is formed by the delta and b chains.

The protein localises to the cell inner membrane. Functionally, key component of the proton channel; it plays a direct role in the translocation of protons across the membrane. In Hahella chejuensis (strain KCTC 2396), this protein is ATP synthase subunit a 1.